A 247-amino-acid chain; its full sequence is tRNA pseudouridine synthase A 1 (247 aa).

Asp53 serves as the catalytic Nucleophile. Substrate is bound at residue Tyr111.

This sequence belongs to the tRNA pseudouridine synthase TruA family. In terms of assembly, homodimer.

The enzyme catalyses uridine(38/39/40) in tRNA = pseudouridine(38/39/40) in tRNA. Functionally, formation of pseudouridine at positions 38, 39 and 40 in the anticodon stem and loop of transfer RNAs. This Bacillus cereus (strain ZK / E33L) protein is tRNA pseudouridine synthase A 1.